Here is a 103-residue protein sequence, read N- to C-terminus: Small ribosomal subunit protein uS10 (103 aa).

The protein belongs to the universal ribosomal protein uS10 family. Part of the 30S ribosomal subunit.

In terms of biological role, involved in the binding of tRNA to the ribosomes. The chain is Small ribosomal subunit protein uS10 from Actinobacillus pleuropneumoniae serotype 5b (strain L20).